We begin with the raw amino-acid sequence, 337 residues long: Cytoskeleton protein RodZ (337 aa).

Residues 1–111 (MNTEATHDQN…LGKRRKKRDG (111 aa)) lie on the Cytoplasmic side of the membrane. Residues 19–71 (LRNAREQLGLSQQAVAERLCLKVSTVRDIEEDKAPADLASTFLRGYIRSYARL) form the HTH cro/C1-type domain. Residues 30–49 (QQAVAERLCLKVSTVRDIEE) constitute a DNA-binding region (H-T-H motif). Residues 112 to 132 (WLMTFTWLVLFVVIGLSGAWW) form a helical; Signal-anchor for type II membrane protein membrane-spanning segment. Residues 133–337 (WQDHKAQQEE…TLNAEQSPAQ (205 aa)) are Periplasmic-facing. Residues 145 to 167 (TMADQSSAELSSNSEQGQSVPLN) are compositionally biased toward polar residues. The disordered stretch occupies residues 145–236 (TMADQSSAEL…TAATTPDGAA (92 aa)). Positions 168–207 (TSTTTDPATTSTPPASVDTTATNTQTPVVTAPAPAVDPQQ) are enriched in low complexity. The span at 208–218 (NAVVSPSQANV) shows a compositional bias: polar residues. The segment covering 219-236 (DTAATPAPTAATTPDGAA) has biased composition (low complexity).

It belongs to the RodZ family.

The protein resides in the cell inner membrane. In terms of biological role, cytoskeletal protein that is involved in cell-shape control through regulation of the length of the long axis. This chain is Cytoskeleton protein RodZ, found in Escherichia coli O157:H7.